A 427-amino-acid polypeptide reads, in one-letter code: tRNA pseudouridine synthase Pus10 (427 aa).

The Nucleophile role is filled by Asp240. Tyr306 and Tyr378 together coordinate substrate.

The protein belongs to the pseudouridine synthase Pus10 family.

It carries out the reaction uridine(54) in tRNA = pseudouridine(54) in tRNA. It catalyses the reaction uridine(55) in tRNA = pseudouridine(55) in tRNA. Its function is as follows. Responsible for synthesis of pseudouridine from uracil-54 and uracil-55 in the psi GC loop of transfer RNAs. This is tRNA pseudouridine synthase Pus10 from Halorubrum lacusprofundi (strain ATCC 49239 / DSM 5036 / JCM 8891 / ACAM 34).